Here is a 1168-residue protein sequence, read N- to C-terminus: Homeodomain-interacting protein kinase 2 (1168 aa).

S16 carries the phosphoserine modification. Residue K32 forms a Glycyl lysine isopeptide (Lys-Gly) (interchain with G-Cter in SUMO); alternate linkage. K32 is covalently cross-linked (Glycyl lysine isopeptide (Lys-Gly) (interchain with G-Cter in SUMO2); alternate). Positions 97–230 (SASSTSVTGQ…TNEIVAIKIL (134 aa)) are transcriptional corepression. S118 and S135 each carry phosphoserine. T141 bears the Phosphothreonine mark. The segment at 189-520 (HEVLCSMTNT…DADKRITPIE (332 aa)) is interaction with DAXX. One can recognise a Protein kinase domain in the interval 199–527 (YEVLEFLGRG…PIETLNHPFV (329 aa)). ATP is bound by residues 205-213 (LGRGTFGQV) and K228. A phosphothreonine mark is found at T252 and T273. D324 functions as the Proton acceptor in the catalytic mechanism. Y361 is subject to Phosphotyrosine. Residue S441 is modified to Phosphoserine. Residues T482, T517, and T566 each carry the phosphothreonine modification. Positions 539 to 816 (THVKSCFQNM…KENTPPRCAM (278 aa)) are interaction with SKI and SMAD1. The interval 595-772 (PSAASMAAVA…MRQQPTSTTS (178 aa)) is interaction with DAZAP2. A phosphoserine mark is found at S607 and S641. Phosphothreonine is present on T660. Residues 724 to 869 (RNTHAHGSHY…ITISSDTDEE (146 aa)) are interaction with POU4F1. Residues 746–848 (HVTLPAAQPL…TRERQRQTIV (103 aa)) form an interaction with CTBP1 region. Residues 759–869 (VAHVMRQQPT…ITISSDTDEE (111 aa)) form an interaction with HMGA1 region. Residues 764-820 (RQQPTSTTSSRKSKQHQPSMRNVSTCEVTSSQSTSSPQRSKRVKENTPPRCAMVHSS) form a disordered region. A compositionally biased stretch (polar residues) spans 765 to 791 (QQPTSTTSSRKSKQHQPSMRNVSTCEV). Residues 774–777 (RKSK) carry the Nuclear localization signal 1 (NLS1) motif. Residues S787 and S799 each carry the phosphoserine modification. Residues 792–801 (TSSQSTSSPQ) show a composition bias toward low complexity. The short motif at 804 to 807 (KRVK) is the Nuclear localization signal 2 (NLS2) element. Residues 812–907 (PRCAMVHSSP…YSDSSSNTSP (96 aa)) are interaction with TP53 and TP73. The interval 845–879 (QTIVIPDTPSPTVSVITISSDTDEEEEQKHAPTST) is interaction with UBE2I. Positions 845–952 (QTIVIPDTPS…PLKTQASEVL (108 aa)) are localization to nuclear speckles. The interval 845-952 (QTIVIPDTPS…PLKTQASEVL (108 aa)) is required for localization to nuclear speckles. The interaction with UBL1 stretch occupies residues 854–876 (SPTVSVITISSDTDEEEEQKHAP). Residues 856 to 880 (TVSVITISSDTDEEEEQKHAPTSTV) form an SUMO interaction motifs (SIM); required for nuclear localization and kinase activity region. The interval 894-936 (HDSPYSDSSSNTSPYSVQQRTGHNGTNTLDTKGALENHCTGNP) is disordered. Residues 895–909 (DSPYSDSSSNTSPYS) show a composition bias toward low complexity. Position 906 is a phosphoserine (S906). Residues 907 to 1022 (PYSVQQRTGH…LSQAQPHMAT (116 aa)) are interaction with AXIN1. Polar residues predominate over residues 910–923 (VQQRTGHNGTNTLD). Residues K925 and K945 each participate in a glycyl lysine isopeptide (Lys-Gly) (interchain with G-Cter in SUMO2) cross-link. The segment at 956 to 1168 (DSLGPAVSTG…PAKVNQYPYI (213 aa)) is autoinhibitory domain (AID). Residues 960–1030 (PAVSTGHHSS…ATDRTGSHRR (71 aa)) are disordered. Residue S963 is modified to Phosphoserine. Low complexity-rich tracts occupy residues 965 to 991 (GHHSSSFKCKSSSTVTSTSGHSSGSSS) and 998 to 1018 (QQRPGPHFQQQQPLNLSQAQP). 3 positions are modified to phosphoserine: S1014, S1125, and S1158. A Glycyl lysine isopeptide (Lys-Gly) (interchain with G-Cter in SUMO) cross-link involves residue K1161.

This sequence belongs to the protein kinase superfamily. CMGC Ser/Thr protein kinase family. HIPK subfamily. As to quaternary structure, interacts with CREB1, SIAH1, WSB1, CBX4, TRADD, p53/TP53, TP73, TP63, CREBBP, DAXX, P53DINP1, SKI, SMAD1, SMAD2 and SMAD3, but not SMAD4. Interacts with ATF1, PML, RUNX1, EP300, NKX1-2, NKX2-5, UBE2I, HMGA1, CTBP1, AXIN1, NLK, MYB, POU4F1, POU4F2, POU4F3, UBE2I, UBL1 and ZBTB4. Probably part of a complex consisting of p53/TP53, HIPK2 and AXIN1. Interacts with SP100; positively regulates TP53-dependent transcription. Interacts with DAZAP2; the interaction results in phosphorylation of DAZAP2 which causes localization of DAZAP2 to the nucleus, reduces interaction of DAZAP2 with HIPK2 and prevents DAZAP2-dependent degradation of HIPK2. Interacts with SIAH1; the interaction is promoted by DAZAP2 and results in SIAH1-mediated ubiquitination and subsequent proteasomal degradation of HIPK2. Post-translationally, autophosphorylation at Tyr-361 in the activation loop activates the kinase and promotes nuclear localization. In terms of processing, sumoylated. When conjugated it is directed to nuclear speckles. Desumoylated by SENP1. Sumoylation on Lys-32 is promoted by the E3 SUMO-protein ligase CBX4. Ubiquitinated by FBXO3, WSB1 and SIAH1, leading to rapid proteasome-dependent degradation. The degradation mediated by FBXO3, but not ubiquitination, is prevented in the presence of PML. The degradation mediated by WSB1 and SIAH1 is reversibly reduced upon DNA damage. Post-translationally, cleaved at Asp-895 and Asp-956 by CASP6 in a p53/TP53-dependent manner. The cleaved form lacks the autoinhibitory C-terminal domain (AID), resulting in a hyperactive kinase, which potentiates p53/TP53 Ser-46 phosphorylation and subsequent activation of the cell death machinery.

It is found in the nucleus. The protein resides in the PML body. The protein localises to the cytoplasm. It carries out the reaction L-seryl-[protein] + ATP = O-phospho-L-seryl-[protein] + ADP + H(+). It catalyses the reaction L-threonyl-[protein] + ATP = O-phospho-L-threonyl-[protein] + ADP + H(+). In terms of biological role, serine/threonine-protein kinase involved in transcription regulation, p53/TP53-mediated cellular apoptosis and regulation of the cell cycle. Acts as a corepressor of several transcription factors, including SMAD1 and POU4F1/Brn3a and probably NK homeodomain transcription factors. Phosphorylates PDX1, ATF1, PML, p53/TP53, CREB1, CTBP1, CBX4, RUNX1, EP300, CTNNB1, HMGA1, ZBTB4 and DAZAP2. Inhibits cell growth and promotes apoptosis through the activation of p53/TP53 both at the transcription level and at the protein level (by phosphorylation and indirect acetylation). The phosphorylation of p53/TP53 may be mediated by a p53/TP53-HIPK2-AXIN1 complex. Involved in the response to hypoxia by acting as a transcriptional co-suppressor of HIF1A. Mediates transcriptional activation of TP73. In response to TGFB, cooperates with DAXX to activate JNK. Negative regulator through phosphorylation and subsequent proteasomal degradation of CTNNB1 and the antiapoptotic factor CTBP1. In the Wnt/beta-catenin signaling pathway acts as an intermediate kinase between MAP3K7/TAK1 and NLK to promote the proteasomal degradation of MYB. Phosphorylates CBX4 upon DNA damage and promotes its E3 SUMO-protein ligase activity. Activates CREB1 and ATF1 transcription factors by phosphorylation in response to genotoxic stress. In response to DNA damage, stabilizes PML by phosphorylation. PML, HIPK2 and FBXO3 may act synergically to activate p53/TP53-dependent transactivation. Promotes angiogenesis, and is involved in erythroid differentiation, especially during fetal liver erythropoiesis. Phosphorylation of RUNX1 and EP300 stimulates EP300 transcription regulation activity. Triggers ZBTB4 protein degradation in response to DNA damage. In response to DNA damage, phosphorylates DAZAP2 which localizes DAZAP2 to the nucleus, reduces interaction of DAZAP2 with HIPK2 and prevents DAZAP2-dependent ubiquitination of HIPK2 by E3 ubiquitin-protein ligase SIAH1 and subsequent proteasomal degradation. Modulates HMGA1 DNA-binding affinity. In response to high glucose, triggers phosphorylation-mediated subnuclear localization shifting of PDX1. Involved in the regulation of eye size, lens formation and retinal lamination during late embryogenesis. This chain is Homeodomain-interacting protein kinase 2 (Hipk2), found in Mesocricetus auratus (Golden hamster).